The chain runs to 464 residues: Soluble pyridine nucleotide transhydrogenase (464 aa).

An FAD-binding site is contributed by 35-44 (DSRRQVGGNC).

It belongs to the class-I pyridine nucleotide-disulfide oxidoreductase family. Requires FAD as cofactor.

The protein localises to the cytoplasm. The catalysed reaction is NAD(+) + NADPH = NADH + NADP(+). In terms of biological role, conversion of NADPH, generated by peripheral catabolic pathways, to NADH, which can enter the respiratory chain for energy generation. The chain is Soluble pyridine nucleotide transhydrogenase from Pseudomonas savastanoi pv. phaseolicola (strain 1448A / Race 6) (Pseudomonas syringae pv. phaseolicola (strain 1448A / Race 6)).